A 116-amino-acid chain; its full sequence is Chorion protein S15 (116 aa).

The signal sequence occupies residues 1–18 (MKFLIAFAVLALVACINA).

Belongs to the chorion protein S15/S18 family.

The protein resides in the secreted. Chorion membrane (egg shell) protein; plays a role in protecting the egg from the environment. The protein is Chorion protein S15 (Cp15) of Drosophila virilis (Fruit fly).